The following is a 283-amino-acid chain: Coiled-coil domain-containing protein 42 homolog (283 aa).

Coiled-coil stretches lie at residues 31-139 and 174-204; these read ATQL…LQRY and QDLR…HRVS.

Belongs to the CFAP73 family.

The polypeptide is Coiled-coil domain-containing protein 42 homolog (Monosiga brevicollis (Choanoflagellate)).